Reading from the N-terminus, the 285-residue chain is Gap junction Cx32.2 protein (285 aa).

The Cytoplasmic portion of the chain corresponds to 2 to 19; the sequence is GDLGFLSKLLDQVQSHST. Residues 20 to 40 form a helical membrane-spanning segment; the sequence is VIGKIWMTVLFLFRIMVLGAG. Residues 41–76 lie on the Extracellular side of the membrane; it reads AESVWGDEQSDFTCNTQQPGCENVCYDWTFPISHIR. A helical membrane pass occupies residues 77-99; the sequence is FWVLQIIFVSTPTLIYLGHAMHI. The Cytoplasmic portion of the chain corresponds to 100 to 148; the sequence is IQQETKLRARLSSPGGSRLCKQPKYTNEQGKVKIKGNLLGSYLTQLVFK. Residues 149-171 traverse the membrane as a helical segment; it reads IIIEAAFIVGQYYLYGFIMVPMF. Residues 172 to 194 are Extracellular-facing; that stretch reads PCSKKPCPFTVECYMSRPTEKTI. The helical transmembrane segment at 195-217 threads the bilayer; sequence FIIFMLVVACVSLLLNVIEVFYL. The Cytoplasmic portion of the chain corresponds to 218–285; the sequence is ICTRVRCGSR…AKEEKRLLSH (68 aa). The disordered stretch occupies residues 264–285; sequence ETSQSIGGSLDGAKEEKRLLSH. Residues 275 to 285 show a composition bias toward basic and acidic residues; that stretch reads GAKEEKRLLSH.

Belongs to the connexin family. Beta-type (group I) subfamily. As to quaternary structure, a connexon is composed of a hexamer of connexins.

It is found in the cell membrane. The protein localises to the cell junction. Its subcellular location is the gap junction. Functionally, one gap junction consists of a cluster of closely packed pairs of transmembrane channels, the connexons, through which materials of low MW diffuse from one cell to a neighboring cell. May be involved in ovarian follicular maturation. This chain is Gap junction Cx32.2 protein, found in Micropogonias undulatus (Atlantic croaker).